Reading from the N-terminus, the 240-residue chain is MKIKIIFSYDGTAFLGSATQPHKKGVQDALSGALSHLGIFSPLLMASRTDKGVHASYAVASVECGDYFTNLEYLQKQLNKFSHPFIHIKKIEKVKDDFEVRFDVKSREYRYIFSHSSYSPFMASYVHFYPKFDLDKANELLGFFVGKKDLKFFCKSGGDNKTTLREIFIARAYAYKDFSIFHFKANGFLRGQIRLSVASVLKVLEGKMSEKELKEQIEAKKQYNHFLAPPNGLYLSRICY.

Aspartate 50 functions as the Nucleophile in the catalytic mechanism. Tyrosine 109 serves as a coordination point for substrate.

Belongs to the tRNA pseudouridine synthase TruA family. In terms of assembly, homodimer.

The catalysed reaction is uridine(38/39/40) in tRNA = pseudouridine(38/39/40) in tRNA. Functionally, formation of pseudouridine at positions 38, 39 and 40 in the anticodon stem and loop of transfer RNAs. This Campylobacter jejuni (strain RM1221) protein is tRNA pseudouridine synthase A.